The sequence spans 447 residues: ATP synthase subunit beta (447 aa).

G147–T154 lines the ATP pocket.

This sequence belongs to the ATPase alpha/beta chains family. In terms of assembly, F-type ATPases have 2 components, CF(1) - the catalytic core - and CF(0) - the membrane proton channel. CF(1) has five subunits: alpha(3), beta(3), gamma(1), delta(1), epsilon(1). CF(0) has three main subunits: a(1), b(2) and c(9-12). The alpha and beta chains form an alternating ring which encloses part of the gamma chain. CF(1) is attached to CF(0) by a central stalk formed by the gamma and epsilon chains, while a peripheral stalk is formed by the delta and b chains.

Its subcellular location is the cell membrane. It catalyses the reaction ATP + H2O + 4 H(+)(in) = ADP + phosphate + 5 H(+)(out). In terms of biological role, produces ATP from ADP in the presence of a proton gradient across the membrane. The catalytic sites are hosted primarily by the beta subunits. This is ATP synthase subunit beta from Carsonella ruddii (strain PV).